A 99-amino-acid chain; its full sequence is UPF0751 protein BCAH820_B0138 (99 aa).

Belongs to the UPF0751 family.

This chain is UPF0751 protein BCAH820_B0138, found in Bacillus cereus (strain AH820).